The following is a 902-amino-acid chain: 4-hydroxyphenylacetate decarboxylase glycyl radical subunit (902 aa).

Positions 38-774 constitute a PFL domain; it reads KRAEDLLDVY…ATLATPDGRL (737 aa). Positions 348 and 507 each coordinate 4-hydroxyphenylacetate. The active-site Cysteine radical intermediate is the C507. Catalysis depends on E509, which acts as the Proton donor. 2 residues coordinate 4-hydroxyphenylacetate: H540 and E641. Residues 782 to 902 enclose the Glycine radical domain; the sequence is GSVSAYAGTD…VIARTEYEGV (121 aa). G877 is modified (glycine radical).

The protein belongs to the glycyl radical enzyme (GRE) family. HPAD subfamily. Heterooctamer consisting of 4 large (HpdB) subunits and 4 small (HpdC) subunits. Also forms a catalytically inactive homodimer. In terms of processing, phosphorylated on serine. Phosphorylation may trigger the formation of the active heterooctamers and thereby regulates enzyme activity. Post-translationally, requires the activating protein HpdA to generate the key active site glycyl radical that is involved in catalysis.

The catalysed reaction is 4-hydroxyphenylacetate + H(+) = 4-methylphenol + CO2. The enzyme catalyses 3,4-dihydroxyphenylacetate + H(+) = 4-methylcatechol + CO2. It catalyses the reaction 2-hydroxy-2-(4-hydroxyphenyl)acetate + H(+) = 4-hydroxybenzyl alcohol + CO2. Enzyme activity catalyzed by the HPA decarboxylase complex is rapidly and irreversibly inactivated by oxygen. Competitively inhibited by p-hydroxyphenylacetamide. Not inhibited by m- or o-hydroxyphenyl-acetate, p-hydroxybenzoate or p-hydroxyphenylpropionate. Functionally, glycyl radical subunit of the HPA decarboxylase that decarboxylates phenylacetates with a hydroxyl group in the p-position. Active toward 4-hydroxyphenylacetate, 3,4-dihydroxyphenylacetate and to a lesser extent p-hydroxymandelate (2-hydroxy-2-(4-hydroxyphenyl)acetate), forming 4-methylphenol, 4-methylcatechol and 4-hydroxybenzylalcohol, respectively. Is likely involved in the catabolism of aromatic amino acids such as tyrosine fermentation. 4-methylphenol (p-cresol) formation provides metabolic toxicity, which may benefit the pathogen C.difficile by suppression of the endogenous gastrointestinal microflora, allowing the development of gastrointestinal infections. The large subunit is the catalytic subunit that binds the substrate. This Clostridioides difficile (Peptoclostridium difficile) protein is 4-hydroxyphenylacetate decarboxylase glycyl radical subunit.